A 279-amino-acid chain; its full sequence is Small ribosomal subunit protein uS2 (279 aa).

Belongs to the universal ribosomal protein uS2 family. In terms of assembly, component of the small ribosomal subunit. Mature ribosomes consist of a small (40S) and a large (60S) subunit. The 40S subunit contains about 33 different proteins and 1 molecule of RNA (18S). The 60S subunit contains about 49 different proteins and 3 molecules of RNA (28S, 5.8S and 5S). Interacts with ribosomal protein S21.

It localises to the cytoplasm. Its function is as follows. Required for the assembly and/or stability of the 40S ribosomal subunit. Required for the processing of the 20S rRNA-precursor to mature 18S rRNA in a late step of the maturation of 40S ribosomal subunits. The chain is Small ribosomal subunit protein uS2 from Schistosoma japonicum (Blood fluke).